The primary structure comprises 330 residues: uncharacterized protein (330 aa).

This is an uncharacterized protein from Schizosaccharomyces pombe (strain 972 / ATCC 24843) (Fission yeast).